Consider the following 302-residue polypeptide: MSNNSSTSFKNQKPVEPIGIIPRSIIRTFNRFIIQLFPNSNALVIQEFRISRYQVFVSIQCLLSLIFIPLIITFLSKTFVFLPLTEYVWNTQTDDIFLNSYLEKEALSELQDFEEQLYFDYFVSPNTYETPNWASYQISTDSSSQLESSFNNFPEILKSEIQKKTLELATHYNQKSIESLTNLFSDFVSFGTFALLVIILKPQIIILKSFLIESIYSLSDTIKSFLLILGTDLLVGFHSPRGWELFLEFVLNRFGFPHDENFIFLFVATLPVLLDTVFKYWIFRYLNKISPSTVATYHAMLE.

The next 4 membrane-spanning stretches (helical) occupy residues 55-75, 187-207, 225-247, and 262-282; these read VFVS…ITFL, FVSF…IIIL, FLLI…ELFL, and FIFL…KYWI.

This sequence belongs to the CemA family.

It is found in the plastid. The protein localises to the chloroplast inner membrane. The catalysed reaction is K(+)(in) + H(+)(out) = K(+)(out) + H(+)(in). Functionally, contributes to K(+)/H(+) antiport activity by supporting proton efflux to control proton extrusion and homeostasis in chloroplasts in a light-dependent manner to modulate photosynthesis. Prevents excessive induction of non-photochemical quenching (NPQ) under continuous-light conditions. Indirectly promotes efficient inorganic carbon uptake into chloroplasts. This is Potassium/proton antiporter CemA from Tupiella akineta (Green alga).